A 470-amino-acid chain; its full sequence is ATP synthase subunit beta (470 aa).

Residue 151-158 participates in ATP binding; the sequence is GGAGVGKT.

Belongs to the ATPase alpha/beta chains family. F-type ATPases have 2 components, CF(1) - the catalytic core - and CF(0) - the membrane proton channel. CF(1) has five subunits: alpha(3), beta(3), gamma(1), delta(1), epsilon(1). CF(0) has three main subunits: a(1), b(2) and c(9-12). The alpha and beta chains form an alternating ring which encloses part of the gamma chain. CF(1) is attached to CF(0) by a central stalk formed by the gamma and epsilon chains, while a peripheral stalk is formed by the delta and b chains.

It localises to the cell membrane. It carries out the reaction ATP + H2O + 4 H(+)(in) = ADP + phosphate + 5 H(+)(out). Produces ATP from ADP in the presence of a proton gradient across the membrane. The catalytic sites are hosted primarily by the beta subunits. The protein is ATP synthase subunit beta of Mycoplasma mobile (strain ATCC 43663 / 163K / NCTC 11711) (Mesomycoplasma mobile).